Here is a 244-residue protein sequence, read N- to C-terminus: MNKSALVTGASRGIGRSIALQLAEEGYNVAVNYAGSKDKAEAVVEEIKAKGVESFAIQANVAKGDEVKEMIKEVVSQFGSVDVLVNNAGITKDNLLMRMKEQEWDDVIDTNLKGVFNCIQKVTPQMLRQRSGAIINLTSIVGAMGNPGQANYVATKAGVIGLTKTAARELASRGITVNAVAPGFIVSDMTNALSDDLKDQMLEQIPLKRFGEDTDIANTVAFLASDKAKYITGQTIHVNGGMYM.

NADP(+) is bound by residues 9–12, 60–61, and asparagine 87; these read GASR and NV. Serine 139 is a substrate binding site. The Proton acceptor role is filled by tyrosine 152. NADP(+)-binding positions include 152 to 156 and isoleucine 185; that span reads YVATK.

The protein belongs to the short-chain dehydrogenases/reductases (SDR) family. As to quaternary structure, homotetramer.

It carries out the reaction a (3R)-hydroxyacyl-[ACP] + NADP(+) = a 3-oxoacyl-[ACP] + NADPH + H(+). The protein operates within lipid metabolism; fatty acid biosynthesis. Catalyzes the NADPH-dependent reduction of beta-ketoacyl-ACP substrates to beta-hydroxyacyl-ACP products, the first reductive step in the elongation cycle of fatty acid biosynthesis. This is 3-oxoacyl-[acyl-carrier-protein] reductase FabG (fabG) from Staphylococcus epidermidis (strain ATCC 35984 / DSM 28319 / BCRC 17069 / CCUG 31568 / BM 3577 / RP62A).